The chain runs to 470 residues: Uronate isomerase (470 aa).

It belongs to the metallo-dependent hydrolases superfamily. Uronate isomerase family.

The catalysed reaction is D-glucuronate = D-fructuronate. The enzyme catalyses aldehydo-D-galacturonate = keto-D-tagaturonate. The protein operates within carbohydrate metabolism; pentose and glucuronate interconversion. In Salmonella arizonae (strain ATCC BAA-731 / CDC346-86 / RSK2980), this protein is Uronate isomerase.